The chain runs to 423 residues: Gamma-glutamyl phosphate reductase (423 aa).

Belongs to the gamma-glutamyl phosphate reductase family.

It is found in the cytoplasm. It catalyses the reaction L-glutamate 5-semialdehyde + phosphate + NADP(+) = L-glutamyl 5-phosphate + NADPH + H(+). It participates in amino-acid biosynthesis; L-proline biosynthesis; L-glutamate 5-semialdehyde from L-glutamate: step 2/2. In terms of biological role, catalyzes the NADPH-dependent reduction of L-glutamate 5-phosphate into L-glutamate 5-semialdehyde and phosphate. The product spontaneously undergoes cyclization to form 1-pyrroline-5-carboxylate. In Roseiflexus castenholzii (strain DSM 13941 / HLO8), this protein is Gamma-glutamyl phosphate reductase.